Here is a 628-residue protein sequence, read N- to C-terminus: tRNA (carboxymethyluridine(34)-5-O)-methyltransferase alkbh8 (628 aa).

The RRM domain maps to Gln43–Lys123. The Fe2OG dioxygenase domain maps to Asp218–Arg335. 2-oxoglutarate is bound at residue Asn225–Tyr227. Fe cation contacts are provided by His236 and Asp238. His240 contributes to the Zn(2+) binding site. Residue His290 participates in Fe cation binding. Residues Arg326 and Arg332 each coordinate 2-oxoglutarate. 3 residues coordinate Zn(2+): Cys339, Cys341, and Cys347. The tract at residues Ala410 to Leu628 is methyltransferase domain. Residues Pro563–Gly582 are disordered. A compositionally biased stretch (basic and acidic residues) spans Val569–Gly582.

It belongs to the alkB family. Fe(2+) is required as a cofactor.

It localises to the cytoplasm. It is found in the nucleus. The catalysed reaction is 5-(carboxymethyl)uridine(34) in tRNA + S-adenosyl-L-methionine = 5-(2-methoxy-2-oxoethyl)uridine(34) in tRNA + S-adenosyl-L-homocysteine. Catalyzes the methylation of 5-carboxymethyl uridine to 5-methylcarboxymethyl uridine at the wobble position of the anticodon loop in tRNA via its methyltransferase domain. Catalyzes the last step in the formation of 5-methylcarboxymethyl uridine at the wobble position of the anticodon loop in target tRNA. Has a preference for tRNA(Arg) and tRNA(Glu), and does not bind tRNA(Lys). Binds tRNA and catalyzes the iron and alpha-ketoglutarate dependent hydroxylation of 5-methylcarboxymethyl uridine at the wobble position of the anticodon loop in tRNA via its dioxygenase domain, giving rise to 5-(S)-methoxycarbonylhydroxymethyluridine; has a preference for tRNA(Gly). Required for normal survival after DNA damage. May inhibit apoptosis and promote cell survival and angiogenesis. The protein is tRNA (carboxymethyluridine(34)-5-O)-methyltransferase alkbh8 (alkbh8) of Xenopus tropicalis (Western clawed frog).